Consider the following 200-residue polypeptide: Large ribosomal subunit protein uL4 (200 aa).

Residues 42–69 (SKAQKNRSDVSGGGRKPWRQKGTGRARA) are disordered.

This sequence belongs to the universal ribosomal protein uL4 family. In terms of assembly, part of the 50S ribosomal subunit.

Its function is as follows. One of the primary rRNA binding proteins, this protein initially binds near the 5'-end of the 23S rRNA. It is important during the early stages of 50S assembly. It makes multiple contacts with different domains of the 23S rRNA in the assembled 50S subunit and ribosome. Functionally, forms part of the polypeptide exit tunnel. This Alcanivorax borkumensis (strain ATCC 700651 / DSM 11573 / NCIMB 13689 / SK2) protein is Large ribosomal subunit protein uL4.